Reading from the N-terminus, the 81-residue chain is Sulfur carrier protein TusA (81 aa).

The active-site Cysteine persulfide intermediate is the Cys-19.

This sequence belongs to the sulfur carrier protein TusA family. In terms of assembly, interacts with IscS.

The protein resides in the cytoplasm. The protein operates within tRNA modification. Functionally, sulfur carrier protein involved in sulfur trafficking in the cell. Part of a sulfur-relay system required for 2-thiolation during synthesis of 2-thiouridine of the modified wobble base 5-methylaminomethyl-2-thiouridine (mnm(5)s(2)U) in tRNA. Interacts with IscS and stimulates its cysteine desulfurase activity. Accepts an activated sulfur from IscS, which is then transferred to TusD, and thus determines the direction of sulfur flow from IscS to 2-thiouridine formation. Also appears to be involved in sulfur transfer for the biosynthesis of molybdopterin. The sequence is that of Sulfur carrier protein TusA from Erwinia tasmaniensis (strain DSM 17950 / CFBP 7177 / CIP 109463 / NCPPB 4357 / Et1/99).